Reading from the N-terminus, the 317-residue chain is 2,3,4,5-tetrahydropyridine-2,6-dicarboxylate N-succinyltransferase (317 aa).

The Mg(2+) site is built by Asp166 and Glu183. Glu199 acts as the Acyl-anhydride intermediate in catalysis. Succinyl-CoA is bound by residues Arg201, Gly216, Ser219, Ala242, 257 to 258 (EA), Gly265, Lys277, and 290 to 293 (RRNS).

The protein belongs to the type 2 tetrahydrodipicolinate N-succinyltransferase family. In terms of assembly, homotrimer.

The protein resides in the cytoplasm. The catalysed reaction is (S)-2,3,4,5-tetrahydrodipicolinate + succinyl-CoA + H2O = (S)-2-succinylamino-6-oxoheptanedioate + CoA. It functions in the pathway amino-acid biosynthesis; L-lysine biosynthesis via DAP pathway; LL-2,6-diaminopimelate from (S)-tetrahydrodipicolinate (succinylase route): step 1/3. Catalyzes the conversion of the cyclic tetrahydrodipicolinate (THDP) into the acyclic N-succinyl-L-2-amino-6-oxopimelate using succinyl-CoA. The polypeptide is 2,3,4,5-tetrahydropyridine-2,6-dicarboxylate N-succinyltransferase (dapD) (Mycobacterium tuberculosis (strain CDC 1551 / Oshkosh)).